Consider the following 224-residue polypeptide: Octanoyltransferase (224 aa).

The BPL/LPL catalytic domain maps to Gly33–Ala213. The segment at Gly51 to Arg71 is disordered. Residues Arg71–His78, Ala143–Gly145, and Gly156–Ala158 contribute to the substrate site. The active-site Acyl-thioester intermediate is the Cys174.

Belongs to the LipB family.

It localises to the cytoplasm. It carries out the reaction octanoyl-[ACP] + L-lysyl-[protein] = N(6)-octanoyl-L-lysyl-[protein] + holo-[ACP] + H(+). The protein operates within protein modification; protein lipoylation via endogenous pathway; protein N(6)-(lipoyl)lysine from octanoyl-[acyl-carrier-protein]: step 1/2. Catalyzes the transfer of endogenously produced octanoic acid from octanoyl-acyl-carrier-protein onto the lipoyl domains of lipoate-dependent enzymes. Lipoyl-ACP can also act as a substrate although octanoyl-ACP is likely to be the physiological substrate. The sequence is that of Octanoyltransferase from Leifsonia xyli subsp. xyli (strain CTCB07).